The chain runs to 349 residues: Fructose-1,6-bisphosphatase class 1 (349 aa).

Residues glutamate 91, aspartate 110, leucine 112, and aspartate 113 each coordinate Mg(2+). Substrate is bound by residues aspartate 113 to serine 116 and asparagine 205. Position 277 (glutamate 277) interacts with Mg(2+).

It belongs to the FBPase class 1 family. As to quaternary structure, homotetramer. Mg(2+) is required as a cofactor.

Its subcellular location is the cytoplasm. It catalyses the reaction beta-D-fructose 1,6-bisphosphate + H2O = beta-D-fructose 6-phosphate + phosphate. It participates in carbohydrate biosynthesis; gluconeogenesis. The chain is Fructose-1,6-bisphosphatase class 1 from Sinorhizobium medicae (strain WSM419) (Ensifer medicae).